Reading from the N-terminus, the 596-residue chain is Endoribonuclease ZC3H12A (596 aa).

Disordered regions lie at residues 1–48 (MSDP…TSEL) and 97–134 (QALTAPSPQPPLVPRGGSTPKPSTLEPSLPEEDREGSD). A compositionally biased stretch (polar residues) spans 10–19 (VQESNPTMSL). The interval 42-87 (EAPTSELQMKVDFFRKLGYSSSEIHSVLQKLGVQADTNTVLGELVK) is ubiquitin association domain. Residues 81–150 (VLGELVKHGS…DGSNVAMSHG (70 aa)) are necessary for interaction with TANK. The RNase stretch occupies residues 112-281 (GGSTPKPSTL…DKFMPPDDPL (170 aa)). An RNase NYN domain is found at 135–290 (LRPVVIDGSN…LGRHGPSLDN (156 aa)). The tract at residues 214-220 (RRVGGKR) is RNA binding. D226 contacts Mg(2+). 2 disordered regions span residues 278–306 (DDPLGRHGPSLDNFLRKKPLPSEHRKQPC) and 340–417 (NALL…PTEW). Residues 301–324 (HRKQPCPYGKKCTYGIKCRFFHPE) form a C3H1-type zinc finger. The interval 301 to 454 (HRKQPCPYGK…SELWGVRGGS (154 aa)) is necessary for interaction with ZC3H12D. Position 344 is a phosphoserine (S344). Over residues 356–368 (QRPSPASQSSSVS) the composition is skewed to low complexity. Phosphoserine occurs at positions 435 and 439. The segment at 511-543 (YWSEPYPLPPPTPVLQEPQRPSPGAGGGPWGRV) is disordered. Low complexity predominate over residues 524–533 (VLQEPQRPSP).

Belongs to the ZC3H12 family. As to quaternary structure, oligomer. Found in a deubiquitination complex with TANK, USP10 and ZC3H12A; this complex inhibits genotoxic stress- or interleukin-1-beta-mediated NF-kappaB activation by promoting IKBKG or TRAF6 deubiquitination. Interacts with IKBKG; this interaction increases in response to DNA damage. Interacts with TANK; this interaction increases in response to DNA damage and serves as a bridge to anchor both TANK and USP10 into a deubiquitinating complex. Interacts with TRAF6; this interaction increases in response to DNA damage and is stimulated by TANK. Interacts with USP10; this interaction increases in response to DNA damage and serves as a bridge to anchor both TANK and USP10 into a deubiquitinating complex. Interacts with ZC3H12D. Interacts with TNRC6A. Interacts with IKBKB/IKKB. Interacts with IKBKB/IKKB. Interacts with IKBKB/IKKB. Interacts with BTRC; the interaction occurs when ZC3H12A is phosphorylated in a IKBKB/IKKB-dependent manner. Interacts with IRAK1; this interaction increases the interaction between ZC3H12A and IKBKB/IKKB. Interacts with UPF1; this interaction occurs in a mRNA translationally active- and termination-dependent manner and is essential for ZC3H12A-mediated degradation of target mRNAs. Associates with ribosomes. Interacts with ubiquitin. It depends on Mg(2+) as a cofactor. Proteolytically cleaved between Arg-111 and Arg-214 by MALT1 in activated T-cells; cleavage at Arg-111 is critical for promoting ZC3H12A degradation in response to T-cell receptor (TCR) stimulation, and hence is necessary for prolonging the stability of a set of mRNAs controlling T-cell activation and Th17 cell differentiation. Post-translationally, phosphorylated by IRAK1; phosphorylation is necessary for subsequent phosphorylation by the I-kappa-B-kinase (IKK) complex. Phosphorylated by I-kappa-B-kinases (IKKs) at Ser-435 and Ser-439 upon lipopolysaccharide (LPS) or IL1B stimulation in macrophages through the MyD88-dependent signaling pathway; these phosphorylations promote rapid ubiquitin proteasome-mediated degradation of ZC3H12A in macrophages and hence allows its target mRNAs, such as IL6, to escape from degradation and accumulate during the inflammatory response. In terms of processing, ubiquitinated; ubiquitination is induced in response to interleukin IL1 receptor stimuli in a IKBKB/IKKB and IRAK1-dependent manner, leading to proteasome-mediated degradation. In terms of tissue distribution, expressed in CD4(+) helper T-cells (at protein level). Highly expressed in macrophages. Expressed in lung, lymph nodes, spleen and thymus. Expressed weakly in heart. Expressed weakly in cardiomyocytes (at protein level). Expressed in spleen, lung, intestine, brown adipose tissue and thymus. Weakly expressed in the heart. Weakly expressed in cardiomyocytes.

The protein localises to the nucleus. It localises to the cytoplasm. Its subcellular location is the rough endoplasmic reticulum membrane. It is found in the cytoplasmic granule. The protein resides in the P-body. Its function is as follows. Endoribonuclease involved in various biological functions such as cellular inflammatory response and immune homeostasis, glial differentiation of neuroprogenitor cells, cell death of cardiomyocytes, adipogenesis and angiogenesis. Functions as an endoribonuclease involved in mRNA decay. Modulates the inflammatory response by promoting the degradation of a set of translationally active cytokine-induced inflammation-related mRNAs, such as IL6 and IL12B, during the early phase of inflammation. Prevents aberrant T-cell-mediated immune reaction by degradation of multiple mRNAs controlling T-cell activation, such as those encoding cytokines (IL6 and IL2), cell surface receptors (ICOS, TNFRSF4 and TNFR2) and transcription factor (REL). Inhibits cooperatively with ZC3H12A the differentiation of helper T cells Th17 in lungs. They repress target mRNA encoding the Th17 cell-promoting factors IL6, ICOS, REL, IRF4, NFKBID and NFKBIZ. The cooperation requires RNA-binding by RC3H1 and the nuclease activity of ZC3H12A. Together with RC3H1, destabilizes TNFRSF4/OX40 mRNA by binding to the conserved stem loop structure in its 3'UTR. Self regulates by destabilizing its own mRNA. Cleaves mRNA harboring a stem-loop (SL), often located in their 3'-UTRs, during the early phase of inflammation in a helicase UPF1-dependent manner. Plays a role in the inhibition of microRNAs (miRNAs) biogenesis. Cleaves the terminal loop of a set of precursor miRNAs (pre-miRNAs) important for the regulation of the inflammatory response leading to their degradation, and thus preventing the biosynthesis of mature miRNAs. Also plays a role in promoting angiogenesis in response to inflammatory cytokines by inhibiting the production of antiangiogenic microRNAs via its anti-dicer RNase activity. Affects the overall ubiquitination of cellular proteins. Positively regulates deubiquitinase activity promoting the cleavage at 'Lys-48'- and 'Lys-63'-linked polyubiquitin chains on TNF receptor-associated factors (TRAFs), preventing JNK and NF-kappa-B signaling pathway activation, and hence negatively regulating macrophage-mediated inflammatory response and immune homeostasis. Induces also deubiquitination of the transcription factor HIF1A, probably leading to its stabilization and nuclear import, thereby positively regulating the expression of proangiogenic HIF1A-targeted genes. Involved in a TANK-dependent negative feedback response to attenuate NF-kappaB activation through the deubiquitination of IKBKG or TRAF6 in response to interleukin-1-beta (IL1B) stimulation or upon DNA damage. Prevents stress granules (SGs) formation and promotes macrophage apoptosis under stress conditions, including arsenite-induced oxidative stress, heat shock, and energy deprivation. Plays a role in the regulation of macrophage polarization; promotes IL4-induced polarization of macrophages M1 into anti-inflammatory M2 state. May also act as a transcription factor that regulates the expression of multiple genes involved in inflammatory response, angiogenesis, adipogenesis and apoptosis. Functions as a positive regulator of glial differentiation of neuroprogenitor cells through an amyloid precursor protein (APP)-dependent signaling pathway. Attenuates septic myocardial contractile dysfunction in response to lipopolysaccharide (LPS) by reducing I-kappa-B-kinase (IKK)-mediated NF-kappa-B activation, and hence myocardial pro-inflammatory cytokine production. In Mus musculus (Mouse), this protein is Endoribonuclease ZC3H12A.